The primary structure comprises 557 residues: Hydroxylamine reductase (557 aa).

[4Fe-4S] cluster is bound by residues C3, C6, C19, and C26. Hybrid [4Fe-2O-2S] cluster is bound by residues H253, E277, C321, C408, C436, C461, E495, and K497. C408 carries the cysteine persulfide modification.

The protein belongs to the HCP family. Requires [4Fe-4S] cluster as cofactor. Hybrid [4Fe-2O-2S] cluster serves as cofactor.

Its subcellular location is the cytoplasm. It catalyses the reaction A + NH4(+) + H2O = hydroxylamine + AH2 + H(+). Functionally, catalyzes the reduction of hydroxylamine to form NH(3) and H(2)O. The protein is Hydroxylamine reductase of Acidiphilium cryptum (strain JF-5).